The primary structure comprises 403 residues: MSKFNRIHLVVLDSVGIGAAPDADKFFNAGVADTDSDTLGHISEAAGLSVPNMAKIGLGNISRPIPLKTVPTEDNPTGYVTKLEEVSLGKDTMTGHWEIMGLNITEPFDTFWNGFPEEILTKIEEFSGRKIIREANKPYSGTAVIDDFGPRQMETGELIVYTSADPVLQIAAHEDIIPVEELYKICEYARSITLERPALLGRIIARPYVGDPGNFTRTANRHDYAVSPFQDTVLNKLADAGVPTYAVGKINDIFNGSGITNDMGHNKSNSHGIDTLIKTLQLPEFTKGFSFTNLVDFDANFGHRRDPEGYRDCLHEFDNRLPEIIANMKEDDLLLITADHGNDPTYAGTDHTREYIPLLAYSVSFTGNGLIPQGHFADISATVAENFGVDTAMIGESFLSHLK.

Mn(2+) contacts are provided by Asp13, Asp298, His303, Asp339, His340, and His351.

It belongs to the phosphopentomutase family. Requires Mn(2+) as cofactor.

It is found in the cytoplasm. The enzyme catalyses 2-deoxy-alpha-D-ribose 1-phosphate = 2-deoxy-D-ribose 5-phosphate. The catalysed reaction is alpha-D-ribose 1-phosphate = D-ribose 5-phosphate. It participates in carbohydrate degradation; 2-deoxy-D-ribose 1-phosphate degradation; D-glyceraldehyde 3-phosphate and acetaldehyde from 2-deoxy-alpha-D-ribose 1-phosphate: step 1/2. Isomerase that catalyzes the conversion of deoxy-ribose 1-phosphate (dRib-1-P) and ribose 1-phosphate (Rib-1-P) to deoxy-ribose 5-phosphate (dRib-5-P) and ribose 5-phosphate (Rib-5-P), respectively. The sequence is that of Phosphopentomutase from Streptococcus pyogenes serotype M3 (strain ATCC BAA-595 / MGAS315).